Here is a 141-residue protein sequence, read N- to C-terminus: Nucleoside diphosphate kinase (141 aa).

K11, F59, R87, T93, R104, and N114 together coordinate ATP. H117 functions as the Pros-phosphohistidine intermediate in the catalytic mechanism.

The protein belongs to the NDK family. In terms of assembly, homotetramer. Mg(2+) serves as cofactor.

It is found in the cytoplasm. It catalyses the reaction a 2'-deoxyribonucleoside 5'-diphosphate + ATP = a 2'-deoxyribonucleoside 5'-triphosphate + ADP. The enzyme catalyses a ribonucleoside 5'-diphosphate + ATP = a ribonucleoside 5'-triphosphate + ADP. Its function is as follows. Major role in the synthesis of nucleoside triphosphates other than ATP. The ATP gamma phosphate is transferred to the NDP beta phosphate via a ping-pong mechanism, using a phosphorylated active-site intermediate. In Cellvibrio japonicus (strain Ueda107) (Pseudomonas fluorescens subsp. cellulosa), this protein is Nucleoside diphosphate kinase.